We begin with the raw amino-acid sequence, 286 residues long: Ribose-phosphate pyrophosphokinase (286 aa).

Residues 34–36 and 91–93 contribute to the ATP site; these read DGE and RQH. H124 and D161 together coordinate Mg(2+). K184 is a catalytic residue. D-ribose 5-phosphate contacts are provided by residues R186, D210, and 214–218; that span reads STGGT.

Belongs to the ribose-phosphate pyrophosphokinase family. Class III (archaeal) subfamily. Homodimer. Mg(2+) serves as cofactor.

Its subcellular location is the cytoplasm. The enzyme catalyses D-ribose 5-phosphate + ATP = 5-phospho-alpha-D-ribose 1-diphosphate + AMP + H(+). The protein operates within metabolic intermediate biosynthesis; 5-phospho-alpha-D-ribose 1-diphosphate biosynthesis; 5-phospho-alpha-D-ribose 1-diphosphate from D-ribose 5-phosphate (route I): step 1/1. Involved in the biosynthesis of the central metabolite phospho-alpha-D-ribosyl-1-pyrophosphate (PRPP) via the transfer of pyrophosphoryl group from ATP to 1-hydroxyl of ribose-5-phosphate (Rib-5-P). The polypeptide is Ribose-phosphate pyrophosphokinase (Thermoplasma volcanium (strain ATCC 51530 / DSM 4299 / JCM 9571 / NBRC 15438 / GSS1)).